The primary structure comprises 177 residues: SPbeta prophage-derived uncharacterized protein YopI (177 aa).

Residues 11–31 (FEGIIGALLGVIVTLILTHIL) traverse the membrane as a helical segment.

It localises to the cell membrane. The chain is SPbeta prophage-derived uncharacterized protein YopI (yopI) from Bacillus subtilis (strain 168).